A 1308-amino-acid polypeptide reads, in one-letter code: Tau-tubulin kinase 1 (1308 aa).

In terms of domain architecture, Protein kinase spans 34–297 (WKVLKKIGGG…LIMSVFENSM (264 aa)). ATP contacts are provided by residues 40-48 (IGGGGFGEI) and K63. D154 (proton acceptor) is an active-site residue. Disordered regions lie at residues 364–397 (LSDQENAPPILPGRPPEGLGPGPHLVPHPGGPEA), 418–448 (PCVEEEQSRGVGVPSSPVRAPPDSPTTPVRS), 474–671 (ERRS…APPF), 720–899 (QVPL…AGGG), 985–1085 (EMES…LARL), and 1097–1308 (RLAS…PGAR). S441 carries the phosphoserine modification. Residues 485-496 (PSRQACSSQPAQ) are compositionally biased toward polar residues. S541 bears the Phosphoserine mark. Basic and acidic residues-rich tracts occupy residues 541–555 (SKEWVIIDKETELKD) and 574–589 (ELRPLPEEGEERRRLG). Residues 638–647 (SPSHSPLHSG) show a composition bias toward low complexity. Residues 735 to 769 (GEEEEEEEEEEEEEEEEEEEEEEEEEEEEEEEEEA) show a composition bias toward acidic residues. A compositionally biased stretch (basic and acidic residues) spans 786–795 (GSERSTERSQ). Polar residues-rich tracts occupy residues 868 to 885 (PTGSQLDVSEPGTLSSIL) and 1020 to 1035 (ASQQEPVTKKGTTISP). The span at 1097–1107 (RLASGASSSSS) shows a compositional bias: low complexity.

It belongs to the protein kinase superfamily. CK1 Ser/Thr protein kinase family. It depends on Mg(2+) as a cofactor. Mn(2+) serves as cofactor. As to expression, expressed in the brain. Strong expression in the cortical layers, the CA1 layers of the hippocampus and the granular layer of the cerebellum. Also expressed in the large cortical pyramidal cells in the temporal cortex, the CA1 pyramidal neurons and the cerebellum granular neurons.

It localises to the cytoplasm. The catalysed reaction is L-seryl-[protein] + ATP = O-phospho-L-seryl-[protein] + ADP + H(+). It carries out the reaction L-threonyl-[protein] + ATP = O-phospho-L-threonyl-[protein] + ADP + H(+). Serine/threonine kinase which is able to phosphorylate TAU on serine, threonine and tyrosine residues. Induces aggregation of TAU. The chain is Tau-tubulin kinase 1 (Ttbk1) from Mus musculus (Mouse).